We begin with the raw amino-acid sequence, 186 residues long: Bis(5'-nucleosyl)-tetraphosphatase, symmetrical (186 aa).

Residues 18 to 132 (RYIHTVGVMN…IYVADYIEPN (115 aa)) form the HD domain. Residue histidine 21 coordinates ADP. Positions 21, 50, and 51 each coordinate Fe cation. Residues 51 to 54 (DYAK), histidine 83, 109 to 110 (HT), aspartate 127, arginine 133, and 170 to 175 (PVFPDT) contribute to the ADP site. Position 127 (aspartate 127) interacts with Fe cation.

It belongs to the Ap4A hydrolase YqeK family. As to quaternary structure, homodimer.

It carries out the reaction P(1),P(4)-bis(5'-adenosyl) tetraphosphate + H2O = 2 ADP + 2 H(+). Functionally, hydrolyzes diadenosine 5',5'''-P1,P4-tetraphosphate (Ap4A) to yield ADP. The chain is Bis(5'-nucleosyl)-tetraphosphatase, symmetrical (yqeK) from Bacillus subtilis (strain 168).